Reading from the N-terminus, the 123-residue chain is Small ribosomal subunit protein uS12 (123 aa).

D89 is modified (3-methylthioaspartic acid). Positions 102–123 (LDTSGVQDRRQRRSKYGAKRPK) are disordered. The segment covering 111–123 (RQRRSKYGAKRPK) has biased composition (basic residues).

The protein belongs to the universal ribosomal protein uS12 family. Part of the 30S ribosomal subunit. Contacts proteins S8 and S17. May interact with IF1 in the 30S initiation complex.

Its function is as follows. With S4 and S5 plays an important role in translational accuracy. In terms of biological role, interacts with and stabilizes bases of the 16S rRNA that are involved in tRNA selection in the A site and with the mRNA backbone. Located at the interface of the 30S and 50S subunits, it traverses the body of the 30S subunit contacting proteins on the other side and probably holding the rRNA structure together. The combined cluster of proteins S8, S12 and S17 appears to hold together the shoulder and platform of the 30S subunit. The protein is Small ribosomal subunit protein uS12 of Lawsonia intracellularis (strain PHE/MN1-00).